Here is a 319-residue protein sequence, read N- to C-terminus: HPr kinase/phosphorylase (319 aa).

Residues His-141 and Lys-162 contribute to the active site. 156–163 provides a ligand contact to ATP; that stretch reads GNSGVGKS. Residue Ser-163 coordinates Mg(2+). The active-site Proton acceptor; for phosphorylation activity. Proton donor; for dephosphorylation activity is Asp-180. Residues 204–213 form an important for the catalytic mechanism of both phosphorylation and dephosphorylation region; the sequence is MEIRGIGIID. Glu-205 contacts Mg(2+). Arg-246 is a catalytic residue. The tract at residues 267–272 is important for the catalytic mechanism of dephosphorylation; it reads PVKVGR.

It belongs to the HPrK/P family. Homohexamer. The cofactor is Mg(2+).

The catalysed reaction is [HPr protein]-L-serine + ATP = [HPr protein]-O-phospho-L-serine + ADP + H(+). It catalyses the reaction [HPr protein]-O-phospho-L-serine + phosphate + H(+) = [HPr protein]-L-serine + diphosphate. In terms of biological role, catalyzes the ATP- as well as the pyrophosphate-dependent phosphorylation of a specific serine residue in HPr, a phosphocarrier protein of the phosphoenolpyruvate-dependent sugar phosphotransferase system (PTS). HprK/P also catalyzes the pyrophosphate-producing, inorganic phosphate-dependent dephosphorylation (phosphorolysis) of seryl-phosphorylated HPr (P-Ser-HPr). The two antagonistic activities of HprK/P are regulated by several intracellular metabolites, which change their concentration in response to the absence or presence of rapidly metabolisable carbon sources (glucose, fructose, etc.) in the growth medium. Therefore, by controlling the phosphorylation state of HPr, HPrK/P is a sensor enzyme that plays a major role in the regulation of carbon metabolism and sugar transport: it mediates carbon catabolite repression (CCR), and regulates PTS-catalyzed carbohydrate uptake and inducer exclusion. In Lactobacillus gasseri (strain ATCC 33323 / DSM 20243 / BCRC 14619 / CIP 102991 / JCM 1131 / KCTC 3163 / NCIMB 11718 / NCTC 13722 / AM63), this protein is HPr kinase/phosphorylase.